Reading from the N-terminus, the 375-residue chain is Probable neutral protease 2 homolog ARB_05817 (375 aa).

An N-terminal signal peptide occupies residues 1-19 (MQVIVALAALGSLAAPALG). A propeptide spanning residues 20–189 (FSIPRGVPVS…RGPLTRINKR (170 aa)) is cleaved from the precursor. Intrachain disulfides connect Cys197–Cys267 and Cys274–Cys292. His317 contributes to the Zn(2+) binding site. The active site involves Glu318. Zn(2+) is bound by residues His321 and Asp332.

Belongs to the peptidase M35 family. Zn(2+) serves as cofactor.

It localises to the secreted. The enzyme catalyses Preferential cleavage of bonds with hydrophobic residues in P1'. Also 3-Asn-|-Gln-4 and 8-Gly-|-Ser-9 bonds in insulin B chain.. Probable secreted metalloprotease that shows high activities on basic nuclear substrates such as histone and protamine. May be involved in virulence. The chain is Probable neutral protease 2 homolog ARB_05817 from Arthroderma benhamiae (strain ATCC MYA-4681 / CBS 112371) (Trichophyton mentagrophytes).